The primary structure comprises 300 residues: Hemagglutinin 1 (300 aa).

A helical membrane pass occupies residues 200 to 221 (FIFATVVFIFLQAGRVPEIIAD).

It localises to the cell membrane. Its function is as follows. Induces agglutination of neuraminidase-treated erythrocytes. This chain is Hemagglutinin 1 (hag1), found in Eikenella corrodens.